The primary structure comprises 235 residues: UPF0502 protein Bcep18194_B0081 (235 aa).

The protein belongs to the UPF0502 family.

In Burkholderia lata (strain ATCC 17760 / DSM 23089 / LMG 22485 / NCIMB 9086 / R18194 / 383), this protein is UPF0502 protein Bcep18194_B0081.